The primary structure comprises 114 residues: MVIRVYIASSSGSMAIKKKQQDVLGFLEANKIGFEEKDIAANEENRKWMRENVPENSRPATGYPLPPQIFNESQYRGDYDAFFEARENNAVYAFLGLTAPPGSKEAEAQAKQQA.

The segment at 13 to 50 (SMAIKKKQQDVLGFLEANKIGFEEKDIAANEENRKWMR) is required for interaction with HER2. A required for interaction with PFN1, HER2, and ATG12 region spans residues 54–71 (PENSRPATGYPLPPQIFN). Residues 61–67 (TGYPLPP) carry the SH3-binding motif.

Belongs to the SH3BGR family. As to quaternary structure, monomer. Interacts with PFN1/Profilin-1. Interacts with ERBB2. Interacts with ATG12. Interacts with BECN1. Interacts with translating ribosomes.

It is found in the cytoplasm. The protein resides in the cytosol. It localises to the cell membrane. Functionally, appears to function as an adapter protein that bridges proteins together or proteins with mRNAs. May function as a ubiquitin ligase-substrate adapter. Additionally, associates with translating cytoplasmic ribosomes and may promote the expression of specific mRNAs. The protein is Adapter SH3BGRL (SH3BGRL) of Bos taurus (Bovine).